The following is a 396-amino-acid chain: Lipid-A-disaccharide synthase (396 aa).

Belongs to the LpxB family.

It catalyses the reaction a lipid X + a UDP-2-N,3-O-bis[(3R)-3-hydroxyacyl]-alpha-D-glucosamine = a lipid A disaccharide + UDP + H(+). Its pathway is bacterial outer membrane biogenesis; LPS lipid A biosynthesis. Condensation of UDP-2,3-diacylglucosamine and 2,3-diacylglucosamine-1-phosphate to form lipid A disaccharide, a precursor of lipid A, a phosphorylated glycolipid that anchors the lipopolysaccharide to the outer membrane of the cell. The chain is Lipid-A-disaccharide synthase from Acinetobacter baylyi (strain ATCC 33305 / BD413 / ADP1).